A 559-amino-acid polypeptide reads, in one-letter code: Sesquiterpene synthase TPS3 (559 aa).

5 residues coordinate (2E,6E)-farnesyl diphosphate: arginine 275, aspartate 312, aspartate 316, arginine 453, and aspartate 456. The Mg(2+) site is built by aspartate 312 and aspartate 316. Residues 312-316 (DDTYD) carry the DDXXD motif motif. Positions 456, 460, and 464 each coordinate Mg(2+).

It belongs to the terpene synthase family. Tpsa subfamily. As to quaternary structure, monomer. It depends on Mg(2+) as a cofactor. As to expression, highly expressed in glandular trichomes. Expressed in roots and leaves.

It localises to the cytoplasm. It catalyses the reaction (2E,6E)-farnesyl diphosphate = (+)-(R)-germacrene A + diphosphate. It participates in secondary metabolite biosynthesis; terpenoid biosynthesis. In terms of biological role, sesquiterpene synthase involved in the biosynthesis of volatile compounds. Mediates the conversion of (2E,6E)-farnesyl diphosphate (FPP) into (+)-(R)-germacrene A. In Xanthium strumarium (Rough cocklebur), this protein is Sesquiterpene synthase TPS3.